The chain runs to 407 residues: MKEFKTLEESLEAARYILPESLYKELVETVEKEDGLSEEDKISVVKETIRTYLRSLAQPGEAVGTVAAQSIGEPGTQMTLRTFHYAGIMEFDVTLGLPRLIEIVDAKQTPSQPLMYIYLKDEYAKDLEKAKEAARKIEYTTLEKIIDNIEWDLGDRVVAIVINAEYMEDKGVTVDMVLEALDKSKLGKVVEDGVREVSEGGVKKVIVYFEISDKQLPDEELFNSNAYHKVLEKLKNTYIKGIKGIRKVTVRREEGEDSYEYMLIVEGSNLREVLMLPEVDHRRSISNDIQEIAQVLGIEAARTAIIEEIKRVLEDSGLDVDIRHLMLIADLMTWPGYVRQIGRLGVVGEKPSPLARAAFEVTVKQLYEAAVWGEEEEFAGVTENIIAGLPPRVGTGSVLLRMGAARK.

It belongs to the RNA polymerase beta' chain family. Part of the RNA polymerase complex.

The protein resides in the cytoplasm. It catalyses the reaction RNA(n) + a ribonucleoside 5'-triphosphate = RNA(n+1) + diphosphate. In terms of biological role, DNA-dependent RNA polymerase (RNAP) catalyzes the transcription of DNA into RNA using the four ribonucleoside triphosphates as substrates. Forms part of the jaw domain. The protein is DNA-directed RNA polymerase subunit Rpo1C of Aeropyrum pernix (strain ATCC 700893 / DSM 11879 / JCM 9820 / NBRC 100138 / K1).